The primary structure comprises 84 residues: MKTLLLTLVVVTIVCLDLGYTRKCLNTPLPLIYTTCPIGQDKCVKMTIKKLPSKYDVIRGCTDICPKSSADVVVVCCDTNKCNK.

Positions 1–21 (MKTLLLTLVVVTIVCLDLGYT) are cleaved as a signal peptide. 4 disulfide bridges follow: C24–C43, C36–C61, C65–C76, and C77–C82.

Belongs to the three-finger toxin family. Short-chain subfamily. Aminergic toxin sub-subfamily. As to expression, expressed by the venom gland.

The protein localises to the secreted. Its function is as follows. Acts as a beta-blocker by binding to beta-1 and beta-2 adrenergic receptors (ADRB1 and ADRB2). It dose-dependently decreases the heart rate (bradycardia), whereas conventional cardiotoxins increases it. At 100 mg/kg, intraperitoneal injection into mice provokes labored breathing, impaired locomotion, lack of response to external stimuli, and death (after 30 minutes). The protein is Beta-cardiotoxin CTX21 of Ophiophagus hannah (King cobra).